The following is a 384-amino-acid chain: Shufflon-specific DNA recombinase (384 aa).

The 88-residue stretch at 9 to 96 folds into the Core-binding (CB) domain; that stretch reads MSLSRALDKY…LLSSLFNIAR (88 aa). Residues 118–284 enclose the Tyr recombinase domain; that stretch reads GRDRRLTSSE…RAWQLVSKLD (167 aa). Catalysis depends on residues Arg-155, Lys-180, His-235, Arg-238, and His-262. The active-site O-(3'-phospho-DNA)-tyrosine intermediate is Tyr-271.

The protein belongs to the 'phage' integrase family.

Shufflon-specific DNA recombinase. The polypeptide is Shufflon-specific DNA recombinase (rci) (Escherichia coli).